The following is a 449-amino-acid chain: Cysteine--tRNA ligase (449 aa).

Position 29 (C29) interacts with Zn(2+). Positions 31–41 (PTVYDHLHIGN) match the 'HIGH' region motif. Zn(2+)-binding residues include C211, H236, and E240. The 'KMSKS' region motif lies at 269–273 (KMSKS). K272 contacts ATP.

It belongs to the class-I aminoacyl-tRNA synthetase family. Monomer. Requires Zn(2+) as cofactor.

It localises to the cytoplasm. It carries out the reaction tRNA(Cys) + L-cysteine + ATP = L-cysteinyl-tRNA(Cys) + AMP + diphosphate. This chain is Cysteine--tRNA ligase, found in Methylocella silvestris (strain DSM 15510 / CIP 108128 / LMG 27833 / NCIMB 13906 / BL2).